A 103-amino-acid polypeptide reads, in one-letter code: Large ribosomal subunit protein eL42 (103 aa).

Residues Cys18 and Cys21 each contribute to the Zn(2+) site. Residues 18–81 form a C4-type zinc finger; the sequence is CPKCRTHTEH…TVLKLKCSKC (64 aa). The interval 40–62 is disordered; the sequence is LSEGERRYARKKKGYGSKRKPEQ. The span at 47-57 shows a compositional bias: basic residues; the sequence is YARKKKGYGSK. Positions 78 and 81 each coordinate Zn(2+).

This sequence belongs to the eukaryotic ribosomal protein eL42 family. Part of the 50S ribosomal subunit. The cofactor is Zn(2+).

In terms of biological role, binds to the 23S rRNA. The protein is Large ribosomal subunit protein eL42 of Desulfurococcus amylolyticus (strain DSM 18924 / JCM 16383 / VKM B-2413 / 1221n) (Desulfurococcus kamchatkensis).